A 559-amino-acid chain; its full sequence is CTP synthase (559 aa).

The interval M1–L283 is amidoligase domain. S25 lines the CTP pocket. S25 serves as a coordination point for UTP. ATP-binding positions include S26 to L31 and D83. D83 and E157 together coordinate Mg(2+). Residues D164–E166, K204–Q209, and K240 contribute to the CTP site. Residues K204–Q209 and K240 each bind UTP. The 250-residue stretch at T308–T557 folds into the Glutamine amidotransferase type-1 domain. G371 lines the L-glutamine pocket. The active-site Nucleophile; for glutamine hydrolysis is the C398. Residues L399 to Q402, E421, and R482 each bind L-glutamine. Residues H530 and E532 contribute to the active site.

This sequence belongs to the CTP synthase family. Homotetramer.

The enzyme catalyses UTP + L-glutamine + ATP + H2O = CTP + L-glutamate + ADP + phosphate + 2 H(+). It catalyses the reaction L-glutamine + H2O = L-glutamate + NH4(+). It carries out the reaction UTP + NH4(+) + ATP = CTP + ADP + phosphate + 2 H(+). Its pathway is pyrimidine metabolism; CTP biosynthesis via de novo pathway; CTP from UDP: step 2/2. With respect to regulation, allosterically activated by GTP, when glutamine is the substrate; GTP has no effect on the reaction when ammonia is the substrate. The allosteric effector GTP functions by stabilizing the protein conformation that binds the tetrahedral intermediate(s) formed during glutamine hydrolysis. Inhibited by the product CTP, via allosteric rather than competitive inhibition. Functionally, catalyzes the ATP-dependent amination of UTP to CTP with either L-glutamine or ammonia as the source of nitrogen. Regulates intracellular CTP levels through interactions with the four ribonucleotide triphosphates. The protein is CTP synthase of Corynebacterium efficiens (strain DSM 44549 / YS-314 / AJ 12310 / JCM 11189 / NBRC 100395).